A 1023-amino-acid chain; its full sequence is 1-phosphatidylinositol 4,5-bisphosphate phosphodiesterase beta-4 (1023 aa).

The PI-PLC X-box domain occupies 149-299; sequence QEMDHPLAHY…LKRKILIKKQ (151 aa). Active-site residues include His164 and His211. The 117-residue stretch at 413-529 folds into the PI-PLC Y-box domain; that stretch reads LSTMINYAQP…GYLLKPDFMR (117 aa). The C2 domain maps to 532-657; sequence DRTFDPFSET…SLRNEGNKPL (126 aa). Disordered regions lie at residues 711 to 742 and 930 to 958; these read ADVP…SELR and KISM…VREL. Composition is skewed to polar residues over residues 729 to 742 and 933 to 942; these read AKAN…SELR and MENSKAISQD. Thr734 carries the post-translational modification Phosphothreonine. Residues 943–957 show a composition bias toward basic and acidic residues; the sequence is KSIKNKAERERRVRE.

Ca(2+) is required as a cofactor. In terms of processing, the N-terminus is blocked. In terms of tissue distribution, preferentially expressed in the retina.

It is found in the cell membrane. The catalysed reaction is a 1,2-diacyl-sn-glycero-3-phospho-(1D-myo-inositol-4,5-bisphosphate) + H2O = 1D-myo-inositol 1,4,5-trisphosphate + a 1,2-diacyl-sn-glycerol + H(+). It carries out the reaction a 1,2-diacyl-sn-glycero-3-phospho-(1D-myo-inositol) + H2O = 1D-myo-inositol 1-phosphate + a 1,2-diacyl-sn-glycerol + H(+). Functionally, activated phosphatidylinositol-specific phospholipase C enzymes catalyze the production of the second messenger molecules diacylglycerol (DAG) and inositol 1,4,5-trisphosphate (IP3) involved in G-protein coupled receptor signaling pathways. PLCB4 is a direct effector of the endothelin receptor signaling pathway that plays an essential role in lower jaw and middle ear structures development. The polypeptide is 1-phosphatidylinositol 4,5-bisphosphate phosphodiesterase beta-4 (PLCB4) (Bos taurus (Bovine)).